A 221-amino-acid polypeptide reads, in one-letter code: Phosphatidylserine decarboxylase proenzyme (221 aa).

The active-site Schiff-base intermediate with substrate; via pyruvic acid is the serine 189. Pyruvic acid (Ser); by autocatalysis is present on serine 189.

It belongs to the phosphatidylserine decarboxylase family. PSD-A subfamily. In terms of assembly, heterodimer of a large membrane-associated beta subunit and a small pyruvoyl-containing alpha subunit. Requires pyruvate as cofactor. In terms of processing, is synthesized initially as an inactive proenzyme. Formation of the active enzyme involves a self-maturation process in which the active site pyruvoyl group is generated from an internal serine residue via an autocatalytic post-translational modification. Two non-identical subunits are generated from the proenzyme in this reaction, and the pyruvate is formed at the N-terminus of the alpha chain, which is derived from the carboxyl end of the proenzyme. The post-translation cleavage follows an unusual pathway, termed non-hydrolytic serinolysis, in which the side chain hydroxyl group of the serine supplies its oxygen atom to form the C-terminus of the beta chain, while the remainder of the serine residue undergoes an oxidative deamination to produce ammonia and the pyruvoyl prosthetic group on the alpha chain.

The protein resides in the cell membrane. The enzyme catalyses a 1,2-diacyl-sn-glycero-3-phospho-L-serine + H(+) = a 1,2-diacyl-sn-glycero-3-phosphoethanolamine + CO2. It functions in the pathway phospholipid metabolism; phosphatidylethanolamine biosynthesis; phosphatidylethanolamine from CDP-diacylglycerol: step 2/2. Catalyzes the formation of phosphatidylethanolamine (PtdEtn) from phosphatidylserine (PtdSer). In Porphyromonas gingivalis (strain ATCC 33277 / DSM 20709 / CIP 103683 / JCM 12257 / NCTC 11834 / 2561), this protein is Phosphatidylserine decarboxylase proenzyme.